Reading from the N-terminus, the 996-residue chain is MEGRGWPWKRKSSDKATTEKPVVGIESTPVCSLSYLASLENQEKCKNTNYVQITMDSYTHMSRMEDQVKLFEVQVKDLKEKLTLAHSEINTKESLILQHAKVAEEAVSGWEKADAETLALKRQLESVTLLKLTAEDRASHLDDALKECTRQIRIVKEESDKKLQDVILAKTSQWDKIKAELEGKIDELSEGLHRAASDNAALTRSLQERSEMIVRISEERSKAEADVEKLKTNLQLAEKEISYLKYDLHVASKEVEIRNEEKNMSLKSADIANKQHLEGVKKIAKLEAECHRLRGLLRKKLPGPAAMAQMKLEVEGLGHEFTDPRAQRNMSQNHNAHIAKAEISTDHKLEECKRENVYLTRRTLEMEEEIQTLKEHLSARNNELQVSRNVCAKTLGKLKILEGQMHMFNNDKNAPKSNSRNLSESLSSGHDHHYPPSVTSVSEDGFDEEGSSSECGPATSLDSHKVRKVSVNGSSKPRSSSRLELMDDFLEIEKLVGSDPDGANSASKSSNSVCSRRSVEKQSSSKSSEPDEDTTTLDQLLMVLRSRINRIFESQEGISIDKIVEAARFSIQEMQGSSTKRMSSHLFEVTDETLEKHVDIQNSEKEQKNTKQQDLEAAVANIHHFIKSTTKEATQLQDMNGNGQLRESLEDFSSSVSKYPTGESSLSDVMLELSRISVLASNLNNGALTLKPHSKEIPVTESNDKVTLLFEESDSNPLGDTFAKTDHCVDNLINGDDSSCKSLLKEVEQLKLEKENIAVELSRCLQNLESTKAWLEEKEQLISKLKSQLTSSEDLQSLAETQLKCVTESYKSLDLHAKELEAKVKSLEEETKRLEMAFTTEKHGHEETLAKCRDLQEKMQRNETCENCSSSKLQPNQEKDIVSATEKLAACQETIHLLSQQLQSLQPQSNHILKSRSPEKKFQQHKASEVTPNSALDDLPHVHIIQPSRSVKHTVNPTVHAIMKSSSVSSSSKEDNEKHTRGLGRFFSSKSKNSAR.

The tract at residues 1–20 (MEGRGWPWKRKSSDKATTEK) is disordered. 4 coiled-coil regions span residues 59-94 (THMS…TKES), 133-248 (TAED…KYDL), 280-301 (VKKI…RKKL), and 359-387 (LTRR…LQVS). 2 disordered regions span residues 409–482 (NNDK…SSSR) and 496–534 (VGSD…DEDT). Low complexity predominate over residues 417-428 (SNSRNLSESLSS). Residues 471–482 (VNGSSKPRSSSR) are compositionally biased toward polar residues. A compositionally biased stretch (low complexity) spans 503-527 (ANSASKSSNSVCSRRSVEKQSSSKS). 3 coiled-coil regions span residues 601-622 (QNSE…VANI), 737-841 (DSSC…FTTE), and 876-906 (NQEK…QSLQ). The disordered stretch occupies residues 962-996 (IMKSSSVSSSSKEDNEKHTRGLGRFFSSKSKNSAR).

This sequence belongs to the FPP family. Interacts with WPP/MAF proteins.

The polypeptide is Filament-like plant protein 5 (FPP5) (Arabidopsis thaliana (Mouse-ear cress)).